The primary structure comprises 151 residues: Macrodomain Ter protein (151 aa).

It belongs to the MatP family. Homodimer.

The protein localises to the cytoplasm. Functionally, required for spatial organization of the terminus region of the chromosome (Ter macrodomain) during the cell cycle. Prevents early segregation of duplicated Ter macrodomains during cell division. Binds specifically to matS, which is a 13 bp signature motif repeated within the Ter macrodomain. The polypeptide is Macrodomain Ter protein (Photorhabdus laumondii subsp. laumondii (strain DSM 15139 / CIP 105565 / TT01) (Photorhabdus luminescens subsp. laumondii)).